We begin with the raw amino-acid sequence, 282 residues long: 4-hydroxy-3-methylbut-2-enyl diphosphate reductase (282 aa).

Cys12 serves as a coordination point for [4Fe-4S] cluster. The (2E)-4-hydroxy-3-methylbut-2-enyl diphosphate site is built by His40 and His72. Positions 40 and 72 each coordinate dimethylallyl diphosphate. Residues His40 and His72 each contribute to the isopentenyl diphosphate site. Cys94 lines the [4Fe-4S] cluster pocket. His122 serves as a coordination point for (2E)-4-hydroxy-3-methylbut-2-enyl diphosphate. His122 provides a ligand contact to dimethylallyl diphosphate. Residue His122 participates in isopentenyl diphosphate binding. The active-site Proton donor is Glu124. Thr160 contacts (2E)-4-hydroxy-3-methylbut-2-enyl diphosphate. Position 188 (Cys188) interacts with [4Fe-4S] cluster. Positions 216, 218, and 260 each coordinate (2E)-4-hydroxy-3-methylbut-2-enyl diphosphate. Dimethylallyl diphosphate-binding residues include Ser216, Asn218, and Ser260. The isopentenyl diphosphate site is built by Ser216, Asn218, and Ser260.

It belongs to the IspH family. It depends on [4Fe-4S] cluster as a cofactor.

It catalyses the reaction isopentenyl diphosphate + 2 oxidized [2Fe-2S]-[ferredoxin] + H2O = (2E)-4-hydroxy-3-methylbut-2-enyl diphosphate + 2 reduced [2Fe-2S]-[ferredoxin] + 2 H(+). The enzyme catalyses dimethylallyl diphosphate + 2 oxidized [2Fe-2S]-[ferredoxin] + H2O = (2E)-4-hydroxy-3-methylbut-2-enyl diphosphate + 2 reduced [2Fe-2S]-[ferredoxin] + 2 H(+). Its pathway is isoprenoid biosynthesis; dimethylallyl diphosphate biosynthesis; dimethylallyl diphosphate from (2E)-4-hydroxy-3-methylbutenyl diphosphate: step 1/1. It functions in the pathway isoprenoid biosynthesis; isopentenyl diphosphate biosynthesis via DXP pathway; isopentenyl diphosphate from 1-deoxy-D-xylulose 5-phosphate: step 6/6. Its function is as follows. Catalyzes the conversion of 1-hydroxy-2-methyl-2-(E)-butenyl 4-diphosphate (HMBPP) into a mixture of isopentenyl diphosphate (IPP) and dimethylallyl diphosphate (DMAPP). Acts in the terminal step of the DOXP/MEP pathway for isoprenoid precursor biosynthesis. This is 4-hydroxy-3-methylbut-2-enyl diphosphate reductase from Geobacter metallireducens (strain ATCC 53774 / DSM 7210 / GS-15).